The primary structure comprises 375 residues: MYLSTLQLGAFRNYDSLTIHFSPGLNVLYGDNAQGKTNLLEAIHFLATGRSHRTSRDPDMVQEGREELLARAAVVRRTGTIELELRCGLQTRKQLKINGIAERKIARLVGSLAVVLFSPDDLQLLKGPPSGRRRFLDLELSQISQTYLHHLMAYNRLVAQRNTLLKQPVIDEGLMAVYDEQLVETGAQLVVRRAEAVRRLSPIASRYHRMLAEDREDLELAYQSQGVGDDGAADLETVRRRLERELARLRSEERRRQVTLVGPHRDDVGFWVAGRDARLYASQGQQRTAVLALKLAELEFMSEEIGEPPLLLLDDVASELDPHRRHYLLSAVREGVQSFITCTDLEDLMVREWPADHRLFRVRAGTVVLDDRGLS.

Gly30–Thr37 is an ATP binding site.

It belongs to the RecF family.

The protein resides in the cytoplasm. Functionally, the RecF protein is involved in DNA metabolism; it is required for DNA replication and normal SOS inducibility. RecF binds preferentially to single-stranded, linear DNA. It also seems to bind ATP. The sequence is that of DNA replication and repair protein RecF from Symbiobacterium thermophilum (strain DSM 24528 / JCM 14929 / IAM 14863 / T).